Consider the following 120-residue polypeptide: Large ribosomal subunit protein bL19 (120 aa).

Belongs to the bacterial ribosomal protein bL19 family.

In terms of biological role, this protein is located at the 30S-50S ribosomal subunit interface and may play a role in the structure and function of the aminoacyl-tRNA binding site. In Nostoc punctiforme (strain ATCC 29133 / PCC 73102), this protein is Large ribosomal subunit protein bL19.